The following is a 238-amino-acid chain: 3-dehydroquinate dehydratase (238 aa).

3-dehydroquinate is bound by residues 35 to 37 (ELR) and Arg-68. His-131 serves as the catalytic Proton donor/acceptor. Lys-158 (schiff-base intermediate with substrate) is an active-site residue. 2 residues coordinate 3-dehydroquinate: Arg-200 and Gln-223.

Belongs to the type-I 3-dehydroquinase family. In terms of assembly, homodimer.

It catalyses the reaction 3-dehydroquinate = 3-dehydroshikimate + H2O. It functions in the pathway metabolic intermediate biosynthesis; chorismate biosynthesis; chorismate from D-erythrose 4-phosphate and phosphoenolpyruvate: step 3/7. Functionally, involved in the third step of the chorismate pathway, which leads to the biosynthesis of aromatic amino acids. Catalyzes the cis-dehydration of 3-dehydroquinate (DHQ) and introduces the first double bond of the aromatic ring to yield 3-dehydroshikimate. In Staphylococcus epidermidis (strain ATCC 35984 / DSM 28319 / BCRC 17069 / CCUG 31568 / BM 3577 / RP62A), this protein is 3-dehydroquinate dehydratase.